Consider the following 291-residue polypeptide: Bifunctional protein FolD (291 aa).

NADP(+)-binding positions include 165–167 (GRS), Ser-190, and Ile-231.

The protein belongs to the tetrahydrofolate dehydrogenase/cyclohydrolase family. In terms of assembly, homodimer.

It carries out the reaction (6R)-5,10-methylene-5,6,7,8-tetrahydrofolate + NADP(+) = (6R)-5,10-methenyltetrahydrofolate + NADPH. It catalyses the reaction (6R)-5,10-methenyltetrahydrofolate + H2O = (6R)-10-formyltetrahydrofolate + H(+). The protein operates within one-carbon metabolism; tetrahydrofolate interconversion. Its function is as follows. Catalyzes the oxidation of 5,10-methylenetetrahydrofolate to 5,10-methenyltetrahydrofolate and then the hydrolysis of 5,10-methenyltetrahydrofolate to 10-formyltetrahydrofolate. This is Bifunctional protein FolD from Azoarcus sp. (strain BH72).